A 214-amino-acid polypeptide reads, in one-letter code: Thymidylate kinase (214 aa).

Residue 15–22 participates in ATP binding; it reads GLEGAGKT.

This sequence belongs to the thymidylate kinase family.

The catalysed reaction is dTMP + ATP = dTDP + ADP. Phosphorylation of dTMP to form dTDP in both de novo and salvage pathways of dTTP synthesis. In Haemophilus ducreyi (strain 35000HP / ATCC 700724), this protein is Thymidylate kinase.